Reading from the N-terminus, the 423-residue chain is UDP-N-acetylglucosamine 1-carboxyvinyltransferase (423 aa).

Position 21–22 (21–22 (KN)) interacts with phosphoenolpyruvate. Arginine 92 provides a ligand contact to UDP-N-acetyl-alpha-D-glucosamine. The Proton donor role is filled by cysteine 116. Residue cysteine 116 is modified to 2-(S-cysteinyl)pyruvic acid O-phosphothioketal. UDP-N-acetyl-alpha-D-glucosamine contacts are provided by aspartate 305 and valine 327.

Belongs to the EPSP synthase family. MurA subfamily.

It localises to the cytoplasm. The catalysed reaction is phosphoenolpyruvate + UDP-N-acetyl-alpha-D-glucosamine = UDP-N-acetyl-3-O-(1-carboxyvinyl)-alpha-D-glucosamine + phosphate. Its pathway is cell wall biogenesis; peptidoglycan biosynthesis. Functionally, cell wall formation. Adds enolpyruvyl to UDP-N-acetylglucosamine. The sequence is that of UDP-N-acetylglucosamine 1-carboxyvinyltransferase from Fervidobacterium nodosum (strain ATCC 35602 / DSM 5306 / Rt17-B1).